Consider the following 368-residue polypeptide: 3-dehydroquinate synthase (368 aa).

NAD(+) contacts are provided by residues 71-76 (DGEAFK), 105-109 (GVVGD), 129-130 (TT), lysine 142, lysine 151, and 169-172 (TLRT). Residues glutamate 184, histidine 247, and histidine 264 each coordinate Zn(2+).

This sequence belongs to the sugar phosphate cyclases superfamily. Dehydroquinate synthase family. Co(2+) is required as a cofactor. It depends on Zn(2+) as a cofactor. The cofactor is NAD(+).

Its subcellular location is the cytoplasm. The enzyme catalyses 7-phospho-2-dehydro-3-deoxy-D-arabino-heptonate = 3-dehydroquinate + phosphate. It functions in the pathway metabolic intermediate biosynthesis; chorismate biosynthesis; chorismate from D-erythrose 4-phosphate and phosphoenolpyruvate: step 2/7. In terms of biological role, catalyzes the conversion of 3-deoxy-D-arabino-heptulosonate 7-phosphate (DAHP) to dehydroquinate (DHQ). The sequence is that of 3-dehydroquinate synthase from Cupriavidus necator (strain ATCC 17699 / DSM 428 / KCTC 22496 / NCIMB 10442 / H16 / Stanier 337) (Ralstonia eutropha).